We begin with the raw amino-acid sequence, 342 residues long: Trans-enoyl reductase himH (342 aa).

NADP(+) is bound at residue 46–49 (TDWK). 133-140 (LSVSTAAS) is a substrate binding site. Residues 168-171 (SSSV), 191-194 (SQAN), 255-256 (VM), and 329-330 (VS) contribute to the NADP(+) site.

This sequence belongs to the zinc-containing alcohol dehydrogenase family. As to quaternary structure, monomer.

It functions in the pathway secondary metabolite biosynthesis. Its function is as follows. Trans-enoyl reductase; part of the him gene cluster that mediates the biosynthesis of himeic acid A, a ubiquitin-activating enzyme (E1) inhibitor. First, himA, together with the trans-enoyl reductase himH, catalyzes the formation of apolyketide chain, which is then condensed with leucine by the NRPS activity of himA. Dieckmann cyclization and release from himA gives a tetramic acid intermediate as the product of himA PKS-NRPS. HimG then catalyzes alpha-oxidation of the tetramic acid ring, with a subsequent rearrangement to yield apyrone intermediate. Two terminal methyl groups of polyketide and amide side chains are oxidized to carboxylic acids by himC cytochrome P450 monooxygenase to form himeic acid A. Himeic acid A is further converted to himeic acid B and C during culture growth. No gene responsible for pyrone to pyridone conversion was found in the him gene cluster and himeic acid A is non-enzymatically converted to himeic acid C by the incorporation of an ammonium nitrogen atom in a pH5 buffer, and to himeic acid B at a conversion ratio of 50% during incubation in MeOH for 5 days. The protein is Trans-enoyl reductase himH of Aspergillus japonicus.